A 289-amino-acid chain; its full sequence is Formamidopyrimidine-DNA glycosylase (289 aa).

P2 (schiff-base intermediate with DNA) is an active-site residue. The active-site Proton donor is E3. K61 functions as the Proton donor; for beta-elimination activity in the catalytic mechanism. H96, R115, and K161 together coordinate DNA. The FPG-type zinc-finger motif lies at 247–281; it reads SAYGQEDRPCPRCGTAIRREKFMNRSSFSCPKCQR. Catalysis depends on R271, which acts as the Proton donor; for delta-elimination activity.

It belongs to the FPG family. As to quaternary structure, monomer. The cofactor is Zn(2+).

It catalyses the reaction Hydrolysis of DNA containing ring-opened 7-methylguanine residues, releasing 2,6-diamino-4-hydroxy-5-(N-methyl)formamidopyrimidine.. It carries out the reaction 2'-deoxyribonucleotide-(2'-deoxyribose 5'-phosphate)-2'-deoxyribonucleotide-DNA = a 3'-end 2'-deoxyribonucleotide-(2,3-dehydro-2,3-deoxyribose 5'-phosphate)-DNA + a 5'-end 5'-phospho-2'-deoxyribonucleoside-DNA + H(+). Its function is as follows. Involved in base excision repair of DNA damaged by oxidation or by mutagenic agents. Acts as a DNA glycosylase that recognizes and removes damaged bases. Has a preference for oxidized purines, such as 7,8-dihydro-8-oxoguanine (8-oxoG). Has AP (apurinic/apyrimidinic) lyase activity and introduces nicks in the DNA strand. Cleaves the DNA backbone by beta-delta elimination to generate a single-strand break at the site of the removed base with both 3'- and 5'-phosphates. This is Formamidopyrimidine-DNA glycosylase from Rhodococcus opacus (strain B4).